Here is a 501-residue protein sequence, read N- to C-terminus: Bifunctional purine biosynthesis protein PurH (501 aa).

The MGS-like domain maps to 1-144 (MKKRALISVF…KNFKDVVVLS (144 aa)).

This sequence belongs to the PurH family.

It catalyses the reaction (6R)-10-formyltetrahydrofolate + 5-amino-1-(5-phospho-beta-D-ribosyl)imidazole-4-carboxamide = 5-formamido-1-(5-phospho-D-ribosyl)imidazole-4-carboxamide + (6S)-5,6,7,8-tetrahydrofolate. It carries out the reaction IMP + H2O = 5-formamido-1-(5-phospho-D-ribosyl)imidazole-4-carboxamide. It functions in the pathway purine metabolism; IMP biosynthesis via de novo pathway; 5-formamido-1-(5-phospho-D-ribosyl)imidazole-4-carboxamide from 5-amino-1-(5-phospho-D-ribosyl)imidazole-4-carboxamide (10-formyl THF route): step 1/1. Its pathway is purine metabolism; IMP biosynthesis via de novo pathway; IMP from 5-formamido-1-(5-phospho-D-ribosyl)imidazole-4-carboxamide: step 1/1. This is Bifunctional purine biosynthesis protein PurH from Clostridium perfringens (strain ATCC 13124 / DSM 756 / JCM 1290 / NCIMB 6125 / NCTC 8237 / Type A).